Reading from the N-terminus, the 104-residue chain is Large ribosomal subunit protein uL24 (104 aa).

The protein belongs to the universal ribosomal protein uL24 family. Part of the 50S ribosomal subunit.

In terms of biological role, one of two assembly initiator proteins, it binds directly to the 5'-end of the 23S rRNA, where it nucleates assembly of the 50S subunit. Functionally, one of the proteins that surrounds the polypeptide exit tunnel on the outside of the subunit. This Halothermothrix orenii (strain H 168 / OCM 544 / DSM 9562) protein is Large ribosomal subunit protein uL24.